The primary structure comprises 485 residues: ATP synthase subunit beta (485 aa).

Over residues 1–11 the composition is skewed to basic and acidic residues; sequence MPATETADKNT. Positions 1-20 are disordered; that stretch reads MPATETADKNTKSANSDTSG. 170–177 contacts ATP; sequence GGAGVGKT.

Belongs to the ATPase alpha/beta chains family. As to quaternary structure, F-type ATPases have 2 components, CF(1) - the catalytic core - and CF(0) - the membrane proton channel. CF(1) has five subunits: alpha(3), beta(3), gamma(1), delta(1), epsilon(1). CF(0) has three main subunits: a(1), b(2) and c(9-12). The alpha and beta chains form an alternating ring which encloses part of the gamma chain. CF(1) is attached to CF(0) by a central stalk formed by the gamma and epsilon chains, while a peripheral stalk is formed by the delta and b chains.

It is found in the cell membrane. The enzyme catalyses ATP + H2O + 4 H(+)(in) = ADP + phosphate + 5 H(+)(out). In terms of biological role, produces ATP from ADP in the presence of a proton gradient across the membrane. The catalytic sites are hosted primarily by the beta subunits. This chain is ATP synthase subunit beta, found in Mycobacterium avium (strain 104).